A 490-amino-acid chain; its full sequence is Betaine aldehyde dehydrogenase (490 aa).

Residue D93 coordinates K(+). 150 to 152 (GAW) serves as a coordination point for NAD(+). K162 (charge relay system) is an active-site residue. Residue 176-179 (KPSE) participates in NAD(+) binding. V180 contacts K(+). 230–233 (GIAS) serves as a coordination point for NAD(+). Residue L246 coordinates K(+). The active-site Proton acceptor is E252. Residues G254, C286, and E387 each coordinate NAD(+). C286 serves as the catalytic Nucleophile. The residue at position 286 (C286) is a Cysteine sulfenic acid (-SOH). K(+)-binding residues include K457 and G460. The Charge relay system role is filled by E464.

This sequence belongs to the aldehyde dehydrogenase family. In terms of assembly, dimer of dimers. The cofactor is K(+).

The enzyme catalyses betaine aldehyde + NAD(+) + H2O = glycine betaine + NADH + 2 H(+). The protein operates within amine and polyamine biosynthesis; betaine biosynthesis via choline pathway; betaine from betaine aldehyde: step 1/1. Involved in the biosynthesis of the osmoprotectant glycine betaine. Catalyzes the irreversible oxidation of betaine aldehyde to the corresponding acid. In Yersinia pestis, this protein is Betaine aldehyde dehydrogenase.